The primary structure comprises 259 residues: GTP cyclohydrolase FolE2 (259 aa).

The protein belongs to the GTP cyclohydrolase IV family.

The catalysed reaction is GTP + H2O = 7,8-dihydroneopterin 3'-triphosphate + formate + H(+). It participates in cofactor biosynthesis; 7,8-dihydroneopterin triphosphate biosynthesis; 7,8-dihydroneopterin triphosphate from GTP: step 1/1. Its function is as follows. Converts GTP to 7,8-dihydroneopterin triphosphate. This Thermosipho africanus (strain TCF52B) protein is GTP cyclohydrolase FolE2.